We begin with the raw amino-acid sequence, 1020 residues long: MSSTKTPISLTIKLNQFTDKPTGLDINPYHNSPIMWRNIIKQLSSRTPQKLLFSSKNRTYSFLGFGQDSIFKDNTKFRSLIPISCSNIVMGFQNLGEYLPGDEFLSRPLIKNQVNNNFCCRKSYASVAEAVAVSSTDAEEDVSVVDEVHELLTELKKEEKKQFAFRRRKQRMLTSGMGHRKYQTLKRRQVKVETEAWEQAAKEYKELLFDMCEQKLAPNLPYVKSLFLGWFEPLRDKIAEEQELCSQGKSKAAYAKYFYQLPADMMAVITMHKLMGLLMTGGDHGTARVVQAALVIGDAIEQEVRIHNFLEKTKKQKAEKDKQKEDGEHVTQEQEKLRKKVTNLMKKQKLRAVGQIVRRQDDSKPWGQDARAKVGSRLIDLLLQTAYIQPPANQLAVDPPDIRPAFVHSVRTVAKETKSASRRYGIIQCDELVFKGLERTARHMVIPYMPMLVPPVKWTGYDKGGHLYLPSYVMRTHGARQQREAVKRASRNQLQPVFEALDTLGNTKWRINKRVLSVVDRIWAGGGRLADLVDRDDAPLPEEPDTEDEALRTKWRWKVKSVKKENRERHSQRCDIELKLAVARKMKDEESFFYPHNVDFRGRAYPMHPHLNHLGSDICRGVLEFAEGRPLGESGLRWLKIHLANLFAGGVEKLSLEGRIGFTENHMDDIFDSSDKPLEGRRWWLNAEDPFQCLAVCINLSEAVRSSSPETSVSHIPVHQDGSCNGLQHYAALGRDKLGAAAVNLVAGEKPADVYSGIAARVLDIMKRDAQRDPAEFPDAVRARVLVNQVDRKLVKQTVMTSVYGVTYIGARDQIKRRLKERGAIADDSELFGAACYAAKVTLTALGEMFEAARSIMTWLGECAKIIASENEPVRWTTPLGLPVVQPYRKIGRHLIKTSLQILTLQRETEKVMVKRQRTAFPPNFIHSLDGSHMMMTAVACRRAGLNFAGVHDSYWTHACDVDKLNRILREKFVELYEAPILEKLLESFQTSYPTLLFPPLPERGDFDMRDVLESPYFFN.

Residues 314 to 336 form a disordered region; sequence KKQKAEKDKQKEDGEHVTQEQEK. Catalysis depends on residues D721, K796, and D953.

The protein belongs to the phage and mitochondrial RNA polymerase family. The highest levels of expression are detected in the mature leaves. The level of expression is lowest in the cotyledons.

It localises to the plastid. Its subcellular location is the chloroplast. The protein resides in the mitochondrion. It catalyses the reaction RNA(n) + a ribonucleoside 5'-triphosphate = RNA(n+1) + diphosphate. Functionally, DNA-dependent RNA polymerase catalyzes the transcription of DNA into RNA using the four ribonucleoside triphosphates as substrates. This Nicotiana sylvestris (Wood tobacco) protein is DNA-directed RNA polymerase 2, chloroplastic/mitochondrial (RPOT2).